An 88-amino-acid polypeptide reads, in one-letter code: Small ribosomal subunit protein uS15c (88 aa).

It belongs to the universal ribosomal protein uS15 family. Part of the 30S ribosomal subunit.

It localises to the plastid. Its subcellular location is the chloroplast. The polypeptide is Small ribosomal subunit protein uS15c (rps15) (Aethionema grandiflorum (Persian stone-cress)).